Consider the following 683-residue polypeptide: MGISLSVLDIKIISTTVLFILSLLAGIAPYWMRNLNNSSRYLSWSNTFAGGVFFGAGMLHLFATADEDLQPYVQKYNYPFAALCLCVGFLITLFLELIINSIFIKSNTFASLHGHSHSHVHLSHGHSHHGKDNGSNGNPGSGVGIGMGSVGALNSKKNKTTSPTITPTTPSEGTTTTTTTTTATTAATAKEIVLEDEDEDEEKDIMDEIIIPDDYDENDDEQIYKKKQSKCARTKFRKFIDTIPTFSSTSTSSTSSSTKISEKQRLLDSSNSYYYNQNKYKGIIGSHIDIDKSGSGVGGFSNNNNNNNNNNNNNNKNNNNNNNNNFRTEIIIQPISTTSNNSVHHYPSSSVNYHPFITTTTTTCSNDNSNSNNNNSSNNNSSSANITPNTNKILSSSKSLSYRYNGDDEEPDIIIDYDDIDYNQEGRTRGNSLGSDSNVHNERIVLINSGIGNSGNIGSNNNNNNNGGGGGGGGNSNIDYNDNEENNNNNNKIESEILIKDTTTDSIKNMKGGEHQHQHLHQQEIIVVTKKSNILLPFILVIALSIHSLFEGLAMGVQSSEIRVFDILIAIFAHKILASFALGISTITSSNEKPSFLKLFLLVFVFSLTSPIGSILGMVIVGSGVTGSMVPPILQGIASGTFLYVAVVEIIPKELSHDSNDILIKSFLLLLGFSGMAVVAIWV.

3 helical membrane-spanning segments follow: residues 12 to 32 (IISTTVLFILSLLAGIAPYWM), 42 to 62 (LSWSNTFAGGVFFGAGMLHLF), and 79 to 99 (PFAALCLCVGFLITLFLELII). Positions 120 to 129 (VHLSHGHSHH) are enriched in basic residues. Disordered regions lie at residues 120 to 180 (VHLS…TTTT), 299 to 325 (GFSNNNNNNNNNNNNNNKNNNNNNNNN), 364 to 390 (CSNDNSNSNNNNSSNNNSSSANITPNT), and 451 to 489 (IGNSGNIGSNNNNNNNGGGGGGGGNSNIDYNDNEENNNN). Positions 137–149 (GNPGSGVGIGMGS) are enriched in gly residues. Composition is skewed to low complexity over residues 160–180 (TTSPTITPTTPSEGTTTTTTT) and 302–325 (NNNNNNNNNNNNNNKNNNNNNNNN). Residues 451–465 (IGNSGNIGSNNNNNN) are compositionally biased toward low complexity. Residues 466–475 (NGGGGGGGGN) show a composition bias toward gly residues. The span at 476 to 489 (SNIDYNDNEENNNN) shows a compositional bias: low complexity. 5 consecutive transmembrane segments (helical) span residues 534–554 (ILLPFILVIALSIHSLFEGLA), 564–584 (VFDILIAIFAHKILASFALGI), 600–620 (FLLVFVFSLTSPIGSILGMVI), 631–651 (PPILQGIASGTFLYVAVVEII), and 662–682 (ILIKSFLLLLGFSGMAVVAIW).

The protein belongs to the ZIP transporter (TC 2.A.5) family.

The protein localises to the membrane. Functionally, may transport divalent cations. May participate, with dstA, in the regulation of the differentiation of stalk cells during development. The polypeptide is Protein zntD (zntD) (Dictyostelium discoideum (Social amoeba)).